Here is a 938-residue protein sequence, read N- to C-terminus: Isoleucine--tRNA ligase (938 aa).

The 'HIGH' region motif lies at 58–68 (PYANGSIHIGH). Glu-561 is a binding site for L-isoleucyl-5'-AMP. A 'KMSKS' region motif is present at residues 602-606 (KMSKS). Position 605 (Lys-605) interacts with ATP. Cys-901, Cys-904, Cys-921, and Cys-924 together coordinate Zn(2+).

The protein belongs to the class-I aminoacyl-tRNA synthetase family. IleS type 1 subfamily. As to quaternary structure, monomer. The cofactor is Zn(2+).

The protein resides in the cytoplasm. The enzyme catalyses tRNA(Ile) + L-isoleucine + ATP = L-isoleucyl-tRNA(Ile) + AMP + diphosphate. Catalyzes the attachment of isoleucine to tRNA(Ile). As IleRS can inadvertently accommodate and process structurally similar amino acids such as valine, to avoid such errors it has two additional distinct tRNA(Ile)-dependent editing activities. One activity is designated as 'pretransfer' editing and involves the hydrolysis of activated Val-AMP. The other activity is designated 'posttransfer' editing and involves deacylation of mischarged Val-tRNA(Ile). This chain is Isoleucine--tRNA ligase, found in Cronobacter sakazakii (strain ATCC BAA-894) (Enterobacter sakazakii).